Reading from the N-terminus, the 357-residue chain is Heme A synthase (357 aa).

5 helical membrane passes run Leu24–Gly44, Met110–Gly130, Met140–Ser160, Ile175–Val195, and Phe209–Gly229. His272 is a binding site for heme. 3 consecutive transmembrane segments (helical) span residues Met274–Val294, Thr303–Met323, and Val325–Val345. His333 contributes to the heme binding site.

Belongs to the COX15/CtaA family. Type 2 subfamily. In terms of assembly, interacts with CtaB. The cofactor is heme b.

The protein resides in the cell membrane. It catalyses the reaction Fe(II)-heme o + 2 A + H2O = Fe(II)-heme a + 2 AH2. The protein operates within porphyrin-containing compound metabolism; heme A biosynthesis; heme A from heme O: step 1/1. Catalyzes the conversion of heme O to heme A by two successive hydroxylations of the methyl group at C8. The first hydroxylation forms heme I, the second hydroxylation results in an unstable dihydroxymethyl group, which spontaneously dehydrates, resulting in the formyl group of heme A. This Brucella anthropi (strain ATCC 49188 / DSM 6882 / CCUG 24695 / JCM 21032 / LMG 3331 / NBRC 15819 / NCTC 12168 / Alc 37) (Ochrobactrum anthropi) protein is Heme A synthase.